Here is a 290-residue protein sequence, read N- to C-terminus: Transcription factor HES-1 (290 aa).

The tract at residues 1–47 is disordered; it reads MPADTGMEKPTASPIAGAPASASHTPDKPRSASEHRKSSKPIMEKRR. Residues 10-23 are compositionally biased toward low complexity; the sequence is PTASPIAGAPASAS. A compositionally biased stretch (basic and acidic residues) spans 25–36; sequence TPDKPRSASEHR. In terms of domain architecture, bHLH spans 35–92; sequence HRKSSKPIMEKRRRARINESLGQLKMLILDALKKDSSRHSKLEKADILEMTVKHLRNL. The Orange domain maps to 111–144; that stretch reads YRAGFNECMNEVTRFLSTCEGVNADVRARLLGHL. Positions 287–290 match the WRPW motif motif; that stretch reads WRPW.

In terms of assembly, transcription repression requires formation of a complex with a corepressor protein of the Groucho/TLE family.

Its subcellular location is the nucleus. Its function is as follows. Transcriptional repressor of genes that require a bHLH protein for their transcription. May act as a negative regulator of myogenesis by inhibiting the functions of MYOD1 and ASH1. The chain is Transcription factor HES-1 (HES1) from Gallus gallus (Chicken).